Consider the following 215-residue polypeptide: Redox-sensing transcriptional repressor Rex (215 aa).

A DNA-binding region (H-T-H motif) is located at residues 18–57; that stretch reads LYYRFLKNLHASGKQRVSSAELSEAVKVDPATIRRDFSYF. An NAD(+)-binding site is contributed by 92-97; the sequence is GVGNLG.

Belongs to the transcriptional regulatory Rex family. Homodimer.

The protein resides in the cytoplasm. Its function is as follows. Modulates transcription in response to changes in cellular NADH/NAD(+) redox state. In Geobacillus sp. (strain WCH70), this protein is Redox-sensing transcriptional repressor Rex.